A 186-amino-acid chain; its full sequence is ADP-ribosylation factor-like protein 8A (186 aa).

Residues 1–19 constitute an intramembrane region (note=Mediates targeting to membranes); that stretch reads MLALFNKLLDWFKALFWKE. GTP-binding positions include 29-35, 71-75, and 130-133; these read QYSGKTT, DIGGQ, and NKRD.

This sequence belongs to the small GTPase superfamily. Arf family.

It is found in the late endosome membrane. Its subcellular location is the lysosome membrane. May play a role in lysosomes motility. Alternatively, may play a role in chromosome segregation. The protein is ADP-ribosylation factor-like protein 8A (arl8a) of Xenopus tropicalis (Western clawed frog).